A 178-amino-acid polypeptide reads, in one-letter code: M-phase-specific PLK1-interacting protein (178 aa).

Positions 1–15 are enriched in pro residues; it reads MHRPNFRPPTPPYPS. The tract at residues 1-134 is disordered; that stretch reads MHRPNFRPPT…RGREKRMSNE (134 aa). A compositionally biased stretch (gly residues) spans 17 to 34; the sequence is GIGGWGGGNNFRGALGGG. At Arg-36 the chain carries Asymmetric dimethylarginine. Residues Ser-39 and Ser-46 each carry the phosphoserine modification. Position 50 is a phosphothreonine (Thr-50). Position 56 is an omega-N-methylarginine (Arg-56). Asymmetric dimethylarginine occurs at positions 58, 67, and 76. The segment covering 78–96 has biased composition (low complexity); it reads GSPSPGGYPGSYSRSPAGS. A phosphoserine mark is found at Ser-79, Ser-81, Ser-92, Ser-103, and Ser-114. Residues 97 to 121 show a composition bias toward polar residues; sequence QHQFGYSPGQQQTYPQGSPRTSTPF. Arg-116 is subject to Omega-N-methylarginine. At Thr-119 the chain carries Phosphothreonine. Residues Ser-123 and Ser-132 each carry the phosphoserine modification.

In terms of assembly, interacts with PLK1; phosphorylation-dependent. Phosphorylated during mitosis in the cell cycle probably by CDK1.

It localises to the nucleus. Its subcellular location is the cytoplasm. The protein resides in the cytoskeleton. It is found in the microtubule organizing center. The protein localises to the centrosome. Functionally, may play a role in maintenance of cell cycle integrity by regulating mitosis or cytokinesis. In Mus musculus (Mouse), this protein is M-phase-specific PLK1-interacting protein (Mplkip).